We begin with the raw amino-acid sequence, 381 residues long: Succinyl-diaminopimelate desuccinylase (381 aa).

Position 71 (His71) interacts with Zn(2+). Asp73 is an active-site residue. Asp104 is a binding site for Zn(2+). The active-site Proton acceptor is the Glu138. Residues Glu139, Glu167, and His353 each coordinate Zn(2+).

It belongs to the peptidase M20A family. DapE subfamily. In terms of assembly, homodimer. Zn(2+) is required as a cofactor. The cofactor is Co(2+).

It catalyses the reaction N-succinyl-(2S,6S)-2,6-diaminopimelate + H2O = (2S,6S)-2,6-diaminopimelate + succinate. The protein operates within amino-acid biosynthesis; L-lysine biosynthesis via DAP pathway; LL-2,6-diaminopimelate from (S)-tetrahydrodipicolinate (succinylase route): step 3/3. Functionally, catalyzes the hydrolysis of N-succinyl-L,L-diaminopimelic acid (SDAP), forming succinate and LL-2,6-diaminopimelate (DAP), an intermediate involved in the bacterial biosynthesis of lysine and meso-diaminopimelic acid, an essential component of bacterial cell walls. This chain is Succinyl-diaminopimelate desuccinylase, found in Shewanella halifaxensis (strain HAW-EB4).